The primary structure comprises 559 residues: MMASRLSSFSSSIARWHGDEHAVASPLDDAEILSMRRTRLFGATGTVLMAIGALGAGARPVVQDPTFGVRLLNLPSRIQTVSLTMTTTGAVMMALAWLMLGRYTLGKRRMSRSQLDHTLMLWTVPLLIAPPMYSRDVYSYLAQSEIAVLGLDPYRVGPATGLGLDHVFTLSVPNLWRETPAPYGPLFLWIGQGISALTGENIVEAVMCHRLVVLIGVGLIVWATPRLARRCGVAEVSALWLGPCNPLLFMHLVAGIHNEALMLGLMLAGTEFALRGIDAAQPLLPRPLAWPSSRAQWQRWQPMAMLVLGAVLIAMSSQVKLPSLLALGFVAMALAWRWGGTVKAFVISCTSLGAISLAVMAVIGWASGLGFGWLFTLGTANVVRSWMSPPTLIALGTGQVGILLGLGDHTTAVLGLTRAIGVFMISILVSWLLFAVLRGRLHPVGGLGVALGGTVLLFPVVQPWYLLWAIIPLAAWATRPGFRGATIAITLIVGIFGPTANGDRFTLFQIVMATLASAVTVLLLIALTYRRLPWRPAPEPPARPPEQPAPADDAYAESP.

12 helical membrane passes run 41 to 61 (FGATGTVLMAIGALGAGARPV), 81 to 101 (VSLTMTTTGAVMMALAWLMLG), 202 to 222 (IVEAVMCHRLVVLIGVGLIVW), 247 to 267 (LLFMHLVAGIHNEALMLGLML), 300 to 316 (WQPMAMLVLGAVLIAMS), 321 to 340 (LPSLLALGFVAMALAWRWGG), 355 to 375 (ISLAVMAVIGWASGLGFGWLF), 386 to 406 (WMSPPTLIALGTGQVGILLGL), 419 to 439 (AIGVFMISILVSWLLFAVLRG), 455 to 475 (VLLFPVVQPWYLLWAIIPLAA), 480 to 500 (PGFRGATIAITLIVGIFGPTA), and 507 to 527 (LFQIVMATLASAVTVLLLIAL). Residues 535 to 548 (RPAPEPPARPPEQP) show a composition bias toward pro residues. A disordered region spans residues 535 to 559 (RPAPEPPARPPEQPAPADDAYAESP).

Belongs to the MptA/B family.

It is found in the membrane. Catalyzes the addition of alpha-(1-&gt;6)-mannose residue. This is Probable alpha-(1-&gt;6)-mannopyranosyltransferase MSMEG_3120/MSMEI_3041 from Mycolicibacterium smegmatis (strain ATCC 700084 / mc(2)155) (Mycobacterium smegmatis).